Reading from the N-terminus, the 211-residue chain is Transcription antitermination protein NusB (211 aa).

This sequence belongs to the NusB family.

Involved in transcription antitermination. Required for transcription of ribosomal RNA (rRNA) genes. Binds specifically to the boxA antiterminator sequence of the ribosomal RNA (rrn) operons. The polypeptide is Transcription antitermination protein NusB (Gloeobacter violaceus (strain ATCC 29082 / PCC 7421)).